Consider the following 796-residue polypeptide: MFNLIRKSTEWGGKTLILESGKIARQANGAVMVSYAGTTVLATVVTGKTKEPVDFLPLTVQFVAKSYAVGKIPGGFLKREGKPSDRETLISRLIDRSIRPLFPSGFYDEVSIVCNLLSYDTVTPPEVTALIGATAALSISGVSFNGLVAGVRIGYLPSEDKYLLNASADDMLYSSLDLFLSGNEDSVLMVESEASELSESQMLRAVTFGHQNCQEVINLIREFSEEKGVQPIEFIPHDINPIVNYIESSYKQDFSLAYSNTVKKERVLKLEELRDKVLSDFAEKCSVDNVECDNQDVISALKSFERSLVRSQIVETSSRIDGRAFDEIRNIEIEVDVLPKAHGSALFTRGNTQALVVTALGTPQDEQIVDDLDGDRRENFLLHYNFPPYAVGESAALRAPGRREIGHGKLAWRAIRYVLPEKSDFPYTIRVVSEITESDGSSSMATVCGASLALMDTGVPIKSPVAGIAMGLIKEGDKFIILSDILGDEDYLGDMDFKVAGTAEGVTALQMDMKISGISVDVIEKALLQAKDGRMHILSKMNAVIQESRNSIKNHAPRIESIFINKDKIRNVIGSGGKNIRDICEKTGAKIEIIQDGTVMIYAVNNEAVEYAKSMIMDIVTEPEIGKVFEGTVVEIVKFGAFVNFLGGKRGLIHISEIKNEHISAVGSVISVNDKVKVLVIGIDREHVQLSMRRVDQETGEPIDGELYNVRKSSFSDDSSSSGTSSSGSSFKESYSGNRHGSHEKRRSGGSRSSRRNSSGSNYYREDLHSSDFGNNNRSFSNSRNGHEVPRKPRFF.

Residues Asp490 and Asp496 each contribute to the Mg(2+) site. A KH domain is found at 557–616; it reads PRIESIFINKDKIRNVIGSGGKNIRDICEKTGAKIEIIQDGTVMIYAVNNEAVEYAKSMI. Residues 626-693 enclose the S1 motif domain; that stretch reads GKVFEGTVVE…DREHVQLSMR (68 aa). Over residues 714–736 the composition is skewed to low complexity; the sequence is SFSDDSSSSGTSSSGSSFKESYS. The tract at residues 714–796 is disordered; it reads SFSDDSSSSG…HEVPRKPRFF (83 aa). Residues 740–755 show a composition bias toward basic residues; it reads HGSHEKRRSGGSRSSR. Positions 771–784 are enriched in low complexity; that stretch reads SDFGNNNRSFSNSR. Over residues 785 to 796 the composition is skewed to basic and acidic residues; that stretch reads NGHEVPRKPRFF.

It belongs to the polyribonucleotide nucleotidyltransferase family. Mg(2+) is required as a cofactor.

Its subcellular location is the cytoplasm. It catalyses the reaction RNA(n+1) + phosphate = RNA(n) + a ribonucleoside 5'-diphosphate. Functionally, involved in mRNA degradation. Catalyzes the phosphorolysis of single-stranded polyribonucleotides processively in the 3'- to 5'-direction. The sequence is that of Polyribonucleotide nucleotidyltransferase from Ehrlichia canis (strain Jake).